We begin with the raw amino-acid sequence, 121 residues long: UPF0212 protein VNG_0879C (121 aa).

Belongs to the UPF0212 family.

The polypeptide is UPF0212 protein VNG_0879C (Halobacterium salinarum (strain ATCC 700922 / JCM 11081 / NRC-1) (Halobacterium halobium)).